Here is a 151-residue protein sequence, read N- to C-terminus: 3-hydroxyacyl-[acyl-carrier-protein] dehydratase FabZ (151 aa).

The active site involves His-53.

Belongs to the thioester dehydratase family. FabZ subfamily.

Its subcellular location is the cytoplasm. The enzyme catalyses a (3R)-hydroxyacyl-[ACP] = a (2E)-enoyl-[ACP] + H2O. In terms of biological role, involved in unsaturated fatty acids biosynthesis. Catalyzes the dehydration of short chain beta-hydroxyacyl-ACPs and long chain saturated and unsaturated beta-hydroxyacyl-ACPs. The sequence is that of 3-hydroxyacyl-[acyl-carrier-protein] dehydratase FabZ from Erythrobacter litoralis (strain HTCC2594).